We begin with the raw amino-acid sequence, 332 residues long: L-lactate dehydrogenase (332 aa).

Residues 29 to 57 and R99 each bind NAD(+); that span reads GQVG…CADK. The substrate site is built by R106, N138, and R169. N138 provides a ligand contact to NAD(+). H193 (proton acceptor) is an active-site residue. T248 is a binding site for substrate.

This sequence belongs to the LDH/MDH superfamily. LDH family. In terms of assembly, homotetramer.

The protein localises to the cytoplasm. The catalysed reaction is (S)-lactate + NAD(+) = pyruvate + NADH + H(+). It functions in the pathway fermentation; pyruvate fermentation to lactate; (S)-lactate from pyruvate: step 1/1. The protein is L-lactate dehydrogenase of Drosophila melanogaster (Fruit fly).